The following is a 151-amino-acid chain: Phosphopantetheine adenylyltransferase (151 aa).

Residue threonine 9 participates in substrate binding. ATP is bound by residues 9-10 and histidine 17; that span reads TF. Substrate-binding residues include lysine 41, threonine 73, and arginine 87. Residues 88-90, glutamate 98, and 122-128 contribute to the ATP site; these read GIR and LTCVSST.

It belongs to the bacterial CoaD family. In terms of assembly, homohexamer. Mg(2+) is required as a cofactor.

The protein localises to the cytoplasm. It carries out the reaction (R)-4'-phosphopantetheine + ATP + H(+) = 3'-dephospho-CoA + diphosphate. It functions in the pathway cofactor biosynthesis; coenzyme A biosynthesis; CoA from (R)-pantothenate: step 4/5. Reversibly transfers an adenylyl group from ATP to 4'-phosphopantetheine, yielding dephospho-CoA (dPCoA) and pyrophosphate. The polypeptide is Phosphopantetheine adenylyltransferase (Bacteroides thetaiotaomicron (strain ATCC 29148 / DSM 2079 / JCM 5827 / CCUG 10774 / NCTC 10582 / VPI-5482 / E50)).